A 359-amino-acid polypeptide reads, in one-letter code: GTP cyclohydrolase FolE2 (359 aa).

Belongs to the GTP cyclohydrolase IV family.

The catalysed reaction is GTP + H2O = 7,8-dihydroneopterin 3'-triphosphate + formate + H(+). Its pathway is cofactor biosynthesis; 7,8-dihydroneopterin triphosphate biosynthesis; 7,8-dihydroneopterin triphosphate from GTP: step 1/1. Its function is as follows. Converts GTP to 7,8-dihydroneopterin triphosphate. The protein is GTP cyclohydrolase FolE2 of Cereibacter sphaeroides (strain ATCC 17029 / ATH 2.4.9) (Rhodobacter sphaeroides).